Reading from the N-terminus, the 435-residue chain is Endoglucanase EG-1 (435 aa).

The N-terminal stretch at 1–20 (MARGTALLGLTSLLLGLVNG) is a signal peptide. A Pyrrolidone carboxylic acid modification is found at Q21. 3 disulfide bridges follow: C38-C44, C71-C93, and C83-C89. A glycan (N-linked (GlcNAc...) asparagine) is linked at N109. 6 disulfides stabilise this stretch: C160/C385, C192/C215, C196/C214, C235/C254, C243/C248, and C259/C335. E217 serves as the catalytic Nucleophile. E222 (proton donor) is an active-site residue. Residue N267 is glycosylated (N-linked (GlcNAc...) asparagine).

The protein belongs to the glycosyl hydrolase 7 (cellulase C) family.

It localises to the secreted. The catalysed reaction is Endohydrolysis of (1-&gt;4)-beta-D-glucosidic linkages in cellulose, lichenin and cereal beta-D-glucans.. Its function is as follows. The biological conversion of cellulose to glucose generally requires three types of hydrolytic enzymes: (1) Endoglucanases which cut internal beta-1,4-glucosidic bonds; (2) Exocellobiohydrolases that cut the disaccharide cellobiose from the non-reducing end of the cellulose polymer chain; (3) Beta-1,4-glucosidases which hydrolyze the cellobiose and other short cello-oligosaccharides to glucose. In Humicola insolens (Soft-rot fungus), this protein is Endoglucanase EG-1 (EG-1).